A 20-amino-acid chain; its full sequence is LAKRADICQPGKTSQRACET.

The interval 1-20 (LAKRADICQPGKTSQRACET) is disordered. Over residues 11 to 20 (GKTSQRACET) the composition is skewed to polar residues.

In terms of processing, contains 4 disulfide bonds. As to expression, expressed by the venom gland.

It is found in the secreted. Has a vascular smooth muscle contracting activity. Causes short-lived contractions of both arterial and venous rabbit vessels. The polypeptide is U27-ctenitoxin-Pn1a (Phoneutria nigriventer (Brazilian armed spider)).